Consider the following 399-residue polypeptide: Pyridinium-3,5-bisthiocarboxylic acid mononucleotide nickel insertion protein (399 aa).

The protein belongs to the LarC family.

The enzyme catalyses Ni(II)-pyridinium-3,5-bisthiocarboxylate mononucleotide = pyridinium-3,5-bisthiocarboxylate mononucleotide + Ni(2+). Involved in the biosynthesis of a nickel-pincer cofactor ((SCS)Ni(II) pincer complex). Binds Ni(2+), and functions in nickel delivery to pyridinium-3,5-bisthiocarboxylic acid mononucleotide (P2TMN), to form the mature cofactor. Is thus probably required for the activation of nickel-pincer cofactor-dependent enzymes. This chain is Pyridinium-3,5-bisthiocarboxylic acid mononucleotide nickel insertion protein, found in Clostridium kluyveri (strain ATCC 8527 / DSM 555 / NBRC 12016 / NCIMB 10680 / K1).